Reading from the N-terminus, the 105-residue chain is Small ribosomal subunit protein uS10c (105 aa).

The protein belongs to the universal ribosomal protein uS10 family. In terms of assembly, part of the 30S ribosomal subunit.

It localises to the plastid. Its subcellular location is the chloroplast. Involved in the binding of tRNA to the ribosomes. The sequence is that of Small ribosomal subunit protein uS10c from Gracilaria tenuistipitata var. liui (Red alga).